The primary structure comprises 115 residues: Xenovulene A biosynthesis cluster protein asL2 (115 aa).

Functionally, part of the gene cluster that mediates the biosynthesis of xenovulene A, an unusual meroterpenoid that has potent inhibitory effects on the human gamma-aminobutyrate A (GABAA) benzodiazepine receptor. The first step of xenovulene A biosynthesis is the biosynthesis of 3-methylorcinaldehyde performed by the non-reducing polyketide synthase aspks1. The salicylate hydroxylase asL1 then catalyzes the oxidative dearomatization of 3-methylorcinaldehyde to yield a dearomatized hydroxycyclohexadione. The 2-oxoglutarate-dependent dioxygenase asL3 further catalyzes the oxidative ring expansion to provide the first tropolone metabolite. The cytochrome P450 monooxygenase asR2 allows the synthesis of tropolone hemiacetal. In parallel, a previously unrecognised class of terpene cyclase, asR6, produces alpha-humulene from farnesylpyrophosphate (FPP). The putative Diels-Alderase asR5 probably catalyzes the formation of the tropolone-humulene skeleton by linking humulene and the polyketide moiety. Oxidative-ring contractions catalyzed by asL4 and asL6 then processively remove carbon atoms from the polyketide to yield xenovulene A. In Sarocladium schorii (Acremonium strictum (strain IMI 501407)), this protein is Xenovulene A biosynthesis cluster protein asL2.